We begin with the raw amino-acid sequence, 196 residues long: GTP cyclohydrolase-2 (196 aa).

A GTP-binding site is contributed by 49 to 53 (RVHSE). Zn(2+) contacts are provided by Cys54, Cys65, and Cys67. Residues Gln70, 92 to 94 (EGR), and Thr114 contribute to the GTP site. Asp126 acts as the Proton acceptor in catalysis. The active-site Nucleophile is the Arg128. GTP is bound by residues Thr149 and Lys154.

It belongs to the GTP cyclohydrolase II family. In terms of assembly, homodimer. Zn(2+) is required as a cofactor.

The catalysed reaction is GTP + 4 H2O = 2,5-diamino-6-hydroxy-4-(5-phosphoribosylamino)-pyrimidine + formate + 2 phosphate + 3 H(+). The protein operates within cofactor biosynthesis; riboflavin biosynthesis; 5-amino-6-(D-ribitylamino)uracil from GTP: step 1/4. Functionally, catalyzes the conversion of GTP to 2,5-diamino-6-ribosylamino-4(3H)-pyrimidinone 5'-phosphate (DARP), formate and pyrophosphate. In Escherichia coli O45:K1 (strain S88 / ExPEC), this protein is GTP cyclohydrolase-2.